Reading from the N-terminus, the 825-residue chain is Beta-glucosidase (825 aa).

The N-terminal stretch at 1–20 (MLLPLYGLASFLVLSQAALV) is a signal peptide. N-linked (GlcNAc...) asparagine glycans are attached at residues Asn21, Asn74, Asn97, Asn230, and Asn271. Residue Asp299 is part of the active site. 11 N-linked (GlcNAc...) asparagine glycosylation sites follow: Asn328, Asn335, Asn537, Asn550, Asn556, Asn578, Asn667, Asn690, Asn718, Asn733, and Asn761.

It belongs to the glycosyl hydrolase 3 family. Homotetramer.

The catalysed reaction is Hydrolysis of terminal, non-reducing beta-D-glucosyl residues with release of beta-D-glucose.. Its pathway is glycan metabolism; cellulose degradation. The polypeptide is Beta-glucosidase (Wickerhamomyces anomalus (Yeast)).